A 228-amino-acid polypeptide reads, in one-letter code: 7-cyano-7-deazaguanine synthase (228 aa).

11–21 (LSGGLDSATVL) lines the ATP pocket. Residues C191, C201, C204, and C207 each coordinate Zn(2+).

This sequence belongs to the QueC family. Requires Zn(2+) as cofactor.

It carries out the reaction 7-carboxy-7-deazaguanine + NH4(+) + ATP = 7-cyano-7-deazaguanine + ADP + phosphate + H2O + H(+). It participates in purine metabolism; 7-cyano-7-deazaguanine biosynthesis. Catalyzes the ATP-dependent conversion of 7-carboxy-7-deazaguanine (CDG) to 7-cyano-7-deazaguanine (preQ(0)). In Magnetococcus marinus (strain ATCC BAA-1437 / JCM 17883 / MC-1), this protein is 7-cyano-7-deazaguanine synthase.